We begin with the raw amino-acid sequence, 650 residues long: Acetyl-coenzyme A synthetase (650 aa).

Residues 191–194 (RGGR), T311, and N335 each bind CoA. Residues 387-389 (GEP), 411-416 (DTWWQT), D501, and R516 contribute to the ATP site. Residue S524 participates in CoA binding. ATP is bound at residue R527. 3 residues coordinate Mg(2+): V538, H540, and I543. A CoA-binding site is contributed by R585. The residue at position 610 (K610) is an N6-acetyllysine.

Belongs to the ATP-dependent AMP-binding enzyme family. It depends on Mg(2+) as a cofactor. In terms of processing, acetylated. Deacetylation by the SIR2-homolog deacetylase activates the enzyme.

It catalyses the reaction acetate + ATP + CoA = acetyl-CoA + AMP + diphosphate. In terms of biological role, catalyzes the conversion of acetate into acetyl-CoA (AcCoA), an essential intermediate at the junction of anabolic and catabolic pathways. AcsA undergoes a two-step reaction. In the first half reaction, AcsA combines acetate with ATP to form acetyl-adenylate (AcAMP) intermediate. In the second half reaction, it can then transfer the acetyl group from AcAMP to the sulfhydryl group of CoA, forming the product AcCoA. This chain is Acetyl-coenzyme A synthetase, found in Vibrio vulnificus (strain YJ016).